The chain runs to 379 residues: Arginine biosynthesis bifunctional protein ArgJ (379 aa).

The substrate site is built by Thr-141, Lys-163, Thr-174, Glu-252, Asn-374, and Thr-379. Thr-174 acts as the Nucleophile in catalysis.

This sequence belongs to the ArgJ family. In terms of assembly, heterotetramer of two alpha and two beta chains.

It is found in the cytoplasm. It catalyses the reaction N(2)-acetyl-L-ornithine + L-glutamate = N-acetyl-L-glutamate + L-ornithine. The enzyme catalyses L-glutamate + acetyl-CoA = N-acetyl-L-glutamate + CoA + H(+). The protein operates within amino-acid biosynthesis; L-arginine biosynthesis; L-ornithine and N-acetyl-L-glutamate from L-glutamate and N(2)-acetyl-L-ornithine (cyclic): step 1/1. It functions in the pathway amino-acid biosynthesis; L-arginine biosynthesis; N(2)-acetyl-L-ornithine from L-glutamate: step 1/4. In terms of biological role, catalyzes two activities which are involved in the cyclic version of arginine biosynthesis: the synthesis of N-acetylglutamate from glutamate and acetyl-CoA as the acetyl donor, and of ornithine by transacetylation between N(2)-acetylornithine and glutamate. This is Arginine biosynthesis bifunctional protein ArgJ from Aquifex aeolicus (strain VF5).